The sequence spans 444 residues: Deoxyguanosinetriphosphate triphosphohydrolase-like protein (444 aa).

Residues 1–26 (MTESLWHERRLTEEKKRRNDHRSPYQ) are disordered. The 192-residue stretch at 59–250 (RLTHSLEVSQ…MELADDIAYA (192 aa)) folds into the HD domain.

It belongs to the dGTPase family. Type 2 subfamily.

This chain is Deoxyguanosinetriphosphate triphosphohydrolase-like protein, found in Shewanella sediminis (strain HAW-EB3).